The sequence spans 170 residues: Shikimate kinase (170 aa).

11–16 (LSGKST) contributes to the ATP binding site. Residue S15 coordinates Mg(2+). D33, R57, and G79 together coordinate substrate. R119 contacts ATP. R137 provides a ligand contact to substrate.

Belongs to the shikimate kinase family. In terms of assembly, monomer. Mg(2+) serves as cofactor.

The protein localises to the cytoplasm. The enzyme catalyses shikimate + ATP = 3-phosphoshikimate + ADP + H(+). The protein operates within metabolic intermediate biosynthesis; chorismate biosynthesis; chorismate from D-erythrose 4-phosphate and phosphoenolpyruvate: step 5/7. In terms of biological role, catalyzes the specific phosphorylation of the 3-hydroxyl group of shikimic acid using ATP as a cosubstrate. In Clostridium botulinum (strain 657 / Type Ba4), this protein is Shikimate kinase.